Here is a 347-residue protein sequence, read N- to C-terminus: NADH-ubiquinone oxidoreductase chain 2 (347 aa).

Helical transmembrane passes span 3–23, 26–46, 67–87, 96–116, 149–169, 178–198, 200–220, 239–259, 274–294, and 325–345; these read PLIFIIIMFTLILGTVITMIS, WLLIWMGLEMNMFSMIPIIMM, SMLLMMGVIINLYYSGQWTIM, YMMTIALAMKLGLAPFHFWVP, LNLNLMLTLAILSILIGGWGG, IMAYSSIAHMGWMTAIIMYNT, LMMLNLVIYLMMTITMFALFI, ILTTMLLTTLLSLGGLPPLSG, NMLLLPTTMAIMALLNLYFYM, and LSPTLITLSTMLIPLTPMMLI.

Belongs to the complex I subunit 2 family. Core subunit of respiratory chain NADH dehydrogenase (Complex I) which is composed of 45 different subunits. Interacts with TMEM242.

It is found in the mitochondrion inner membrane. The enzyme catalyses a ubiquinone + NADH + 5 H(+)(in) = a ubiquinol + NAD(+) + 4 H(+)(out). Core subunit of the mitochondrial membrane respiratory chain NADH dehydrogenase (Complex I) which catalyzes electron transfer from NADH through the respiratory chain, using ubiquinone as an electron acceptor. Essential for the catalytic activity and assembly of complex I. The chain is NADH-ubiquinone oxidoreductase chain 2 from Dasypus novemcinctus (Nine-banded armadillo).